Consider the following 646-residue polypeptide: Cytochrome b translation regulator cbp8 (646 aa).

As to quaternary structure, component of a complex, at least composed of cbp7 and cbp8.

Its subcellular location is the mitochondrion. Its function is as follows. Translation factor for cob1/cytochrome b; plays a role in cob1 mRNA stabilization and required for correct folding of the protein. In Schizosaccharomyces pombe (strain 972 / ATCC 24843) (Fission yeast), this protein is Cytochrome b translation regulator cbp8.